A 303-amino-acid chain; its full sequence is Aquaporin NIP1-2 (303 aa).

The segment at M1–C39 is disordered. Basic and acidic residues predominate over residues Q17–S26. 2 helical membrane passes run I66–V86 and G91–V111. The short motif at N123–A125 is the NPA 1 element. 3 helical membrane-spanning segments follow: residues V145 to G165, A188 to T208, and A212 to A232. The NPA 2 signature appears at N241 to A243. A helical membrane pass occupies residues Y255–A275.

This sequence belongs to the MIP/aquaporin (TC 1.A.8) family. NIP (TC 1.A.8.12) subfamily. Expressed in roots and leaves, and at lower levels in anthers.

The protein resides in the membrane. Its function is as follows. Aquaporins facilitate the transport of water and small neutral solutes across cell membranes. The chain is Aquaporin NIP1-2 (NIP1-2) from Oryza sativa subsp. japonica (Rice).